Consider the following 442-residue polypeptide: Ankyrin repeat and MYND domain-containing protein 2 (442 aa).

3 ANK repeats span residues 45–74 (NGMTPLMHAAYKGKLDMCKLLLRHGADVNC), 79–108 (HGYTALMFAALSGNKDITWVMLEAGAETDV), and 159–188 (KLAGPLHKIITTTNLHPVKIVMLINENPLL). Zn(2+)-binding residues include C320, C323, C332, C335, C341, C345, H353, and C357. The MYND-type zinc-finger motif lies at 320–357 (CTTCGEKGASKRCSVCKMVIYCDQTCQKTHWFAHKKIC). Basic and acidic residues predominate over residues 401-421 (TRICQKNDNPKDSEEGEKESL). Residues 401-442 (TRICQKNDNPKDSEEGEKESLQSDAGLEGLQEAAVGPQVSEE) are disordered.

As to quaternary structure, interacts with the retinal-specific guanylyl cyclase GC1.

It is found in the cell projection. The protein localises to the cilium. May be involved in the trafficking of signaling proteins to the cilia. The chain is Ankyrin repeat and MYND domain-containing protein 2 (ANKMY2) from Bos taurus (Bovine).